The sequence spans 1079 residues: Transport and Golgi organization protein 6 homolog (1079 aa).

Residues 473-493 traverse the membrane as a helical segment; the sequence is VPVLLDSLLPLLRVFFSLYCF. Position 561 is a phosphoserine (serine 561). The segment at 767 to 818 is disordered; it reads AQSTLNQKDPGQKIEEQRQTSPDISTEGAQKPPRTGQGSSGPCTATSQPPGS. Polar residues-rich tracts occupy residues 785–794 and 802–818; these read QTSPDISTEG and GQGSSGPCTATSQPPGS. HEAT repeat units follow at residues 864-902 and 937-973; these read LLQIFLENLEHEDSFVYLSAIQGIALLSDVYPEEILVDL and SKYREPLIHTFLRGVRDPDAAHRASSLANLGELCQCL.

The protein belongs to the Tango6 family.

Its subcellular location is the membrane. This chain is Transport and Golgi organization protein 6 homolog (Tango6), found in Mus musculus (Mouse).